Reading from the N-terminus, the 203-residue chain is tRNA (cytidine(56)-2'-O)-methyltransferase (203 aa).

Residues leucine 80, 109–113, and 127–134 each bind S-adenosyl-L-methionine; these read GAEKV and IGNQPHSE. A disordered region spans residues 178 to 203; it reads AEQDKAEGKATPGKNWENSGFTGDNP. Polar residues predominate over residues 193–203; that stretch reads WENSGFTGDNP.

This sequence belongs to the aTrm56 family. In terms of assembly, homodimer.

It is found in the cytoplasm. The catalysed reaction is cytidine(56) in tRNA + S-adenosyl-L-methionine = 2'-O-methylcytidine(56) in tRNA + S-adenosyl-L-homocysteine + H(+). Functionally, specifically catalyzes the AdoMet-dependent 2'-O-ribose methylation of cytidine at position 56 in tRNAs. This Pyrococcus horikoshii (strain ATCC 700860 / DSM 12428 / JCM 9974 / NBRC 100139 / OT-3) protein is tRNA (cytidine(56)-2'-O)-methyltransferase.